Consider the following 500-residue polypeptide: Putative beta-lactamase-like 1 (500 aa).

Belongs to the beta-lactamase family.

In Homo sapiens (Human), this protein is Putative beta-lactamase-like 1 (LACTBL1).